Here is a 309-residue protein sequence, read N- to C-terminus: Partitioning defective protein 6 (309 aa).

A PB1 domain is found at 14–96 (TLQVKSKFDS…PLLRLLIQRR (83 aa)). Positions 132–149 (ISNPEDFRQVSAIIDVDI) constitute a Pseudo-CRIB domain. The PDZ domain maps to 156 to 249 (RVRLCKHGQE…NLIITVKPAN (94 aa)). Positions 249–270 (NQRNTLSRGPSQQGTPNASEMS) are enriched in polar residues. Positions 249-309 (NQRNTLSRGP…DANDSDSGED (61 aa)) are disordered.

This sequence belongs to the PAR6 family. Interacts with par-3, required for its peripheral localization, and with cdc-42, required for the activation of a par-3/par-6/pkc-3 complex. Colocalized with par-3 at all stages in early embryos, at the anterior cortex of the embryo. Patchy expression observed at the periphery after completion of meiosis I and in meiosis II, which on completion of metaphase II, is restricted to the anterior 85% of embryo length; this decreases to 55% in embryos between prophase and telophase of the first mitosis. During the first cleavage, expression is detected in the advancing furrow. Along with pkc-3, is unable to associate with the apical cortex of cells that lack par-3. Transiently coexpressed and colocalized with par-3 and pkc-3, asymmetrically in the developing somatic gonad, including the spermathecal precursor cells of L4 larvae.

The protein localises to the cytoplasm. It localises to the cell membrane. The protein resides in the cell junction. It is found in the tight junction. Its function is as follows. Necessary for apicobasal and anterior-posterior asymmetries associated with cell adhesion and gastrulation during the first few cell cycles of embryogenesis. Required for localizing/ maintaining par-3 at the cell periphery. Regulates mes-1 expression and/or localization pattern during early embryogenesis. Acts together with par-3 and pkc-3 in maintaining epithelial cell polarity in the distal spermatheca. Plays a role in endosome and Golgi body positioning. The protein is Partitioning defective protein 6 of Caenorhabditis elegans.